The chain runs to 233 residues: MLIPIPALNDNYIWVYKRENLSVIVIDIPEIAALSQFIQAQNLVIGALLITHNHRDHIGALAEFKQFYPHVHIYGPAECADQGVTQVIDAGRLIIDEYHIDVLPTGGHTAQHLSFLIDGHLFCGDTLFSAGCGRVFTGDYSQMFTSLQLLKSLPDETIVCPAHEYTLGNLAFALTTGKNKSAVQKQLEKVKKLRAENKPSLPTTLALEKQINPFLQVESLDEFIELRKAKDVF.

Zn(2+)-binding residues include His52, His54, Asp56, His57, His108, Asp125, and His163.

The protein belongs to the metallo-beta-lactamase superfamily. Glyoxalase II family. In terms of assembly, monomer. Zn(2+) is required as a cofactor.

The enzyme catalyses an S-(2-hydroxyacyl)glutathione + H2O = a 2-hydroxy carboxylate + glutathione + H(+). The protein operates within secondary metabolite metabolism; methylglyoxal degradation; (R)-lactate from methylglyoxal: step 2/2. Its function is as follows. Thiolesterase that catalyzes the hydrolysis of S-D-lactoyl-glutathione to form glutathione and D-lactic acid. The polypeptide is Hydroxyacylglutathione hydrolase (Histophilus somni (strain 129Pt) (Haemophilus somnus)).